The chain runs to 171 residues: T-cell surface glycoprotein CD3 delta chain (171 aa).

An N-terminal signal peptide occupies residues 1 to 21; it reads MEHSTFLSGLVLATLLSQVSP. The Extracellular segment spans residues 22-105; the sequence is FKIPVEELED…CVELDPATLA (84 aa). Cys-37 and Cys-73 are disulfide-bonded. Residues Asn-38, Asn-54, and Asn-74 are each glycosylated (N-linked (GlcNAc...) asparagine). A helical membrane pass occupies residues 106 to 126; the sequence is GIIVTDVIATLLLALGVFCFA. Residues 127–171 are Cytoplasmic-facing; that stretch reads GHETGRLSGAADTQALLRNDQVYQPLRDRDDAQYSRLGGNWARNK. The region spanning 138–166 is the ITAM domain; that stretch reads DTQALLRNDQVYQPLRDRDDAQYSRLGGN. Phosphotyrosine is present on residues Tyr-149 and Tyr-160.

As to quaternary structure, the TCR-CD3 complex is composed of a CD3D/CD3E and a CD3G/CD3E heterodimers that preferentially associate with TCRalpha and TCRbeta, respectively, to form TCRalpha/CD3E/CD3G and TCRbeta/CD3G/CD3E trimers. In turn, the hexamer interacts with CD3Z homodimer to form the TCR-CD3 complex. Alternatively, TCRalpha and TCRbeta can be replaced by TCRgamma and TCRdelta. Interacts with coreceptors CD4 and CD8. In terms of processing, phosphorylated on Tyr residues after T-cell receptor triggering by LCK in association with CD4/CD8. In terms of tissue distribution, CD3D is mostly present on T-lymphocytes with its TCR-CD3 partners. Present also in fetal NK-cells.

The protein localises to the cell membrane. Functionally, part of the TCR-CD3 complex present on T-lymphocyte cell surface that plays an essential role in adaptive immune response. When antigen presenting cells (APCs) activate T-cell receptor (TCR), TCR-mediated signals are transmitted across the cell membrane by the CD3 chains CD3D, CD3E, CD3G and CD3Z. All CD3 chains contain immunoreceptor tyrosine-based activation motifs (ITAMs) in their cytoplasmic domain. Upon TCR engagement, these motifs become phosphorylated by Src family protein tyrosine kinases LCK and FYN, resulting in the activation of downstream signaling pathways. In addition of this role of signal transduction in T-cell activation, CD3D plays an essential role in thymocyte differentiation. Indeed, participates in correct intracellular TCR-CD3 complex assembly and surface expression. In absence of a functional TCR-CD3 complex, thymocytes are unable to differentiate properly. Interacts with CD4 and CD8 and thus serves to establish a functional link between the TCR and coreceptors CD4 and CD8, which is needed for activation and positive selection of CD4 or CD8 T-cells. The chain is T-cell surface glycoprotein CD3 delta chain (CD3D) from Macaca fascicularis (Crab-eating macaque).